We begin with the raw amino-acid sequence, 134 residues long: Small ribosomal subunit protein uS11 (134 aa).

Over residues 113-122 (SSITDATPQP) the composition is skewed to polar residues. The disordered stretch occupies residues 113-134 (SSITDATPQPHNGCRPTKRRKV).

Belongs to the universal ribosomal protein uS11 family. As to quaternary structure, part of the 30S ribosomal subunit. Interacts with proteins S7 and S18. Binds to IF-3.

Functionally, located on the platform of the 30S subunit, it bridges several disparate RNA helices of the 16S rRNA. Forms part of the Shine-Dalgarno cleft in the 70S ribosome. The chain is Small ribosomal subunit protein uS11 from Corynebacterium aurimucosum (strain ATCC 700975 / DSM 44827 / CIP 107346 / CN-1) (Corynebacterium nigricans).